Here is a 416-residue protein sequence, read N- to C-terminus: Gamma-glutamyl phosphate reductase (416 aa).

It belongs to the gamma-glutamyl phosphate reductase family.

The protein localises to the cytoplasm. It catalyses the reaction L-glutamate 5-semialdehyde + phosphate + NADP(+) = L-glutamyl 5-phosphate + NADPH + H(+). The protein operates within amino-acid biosynthesis; L-proline biosynthesis; L-glutamate 5-semialdehyde from L-glutamate: step 2/2. Functionally, catalyzes the NADPH-dependent reduction of L-glutamate 5-phosphate into L-glutamate 5-semialdehyde and phosphate. The product spontaneously undergoes cyclization to form 1-pyrroline-5-carboxylate. The sequence is that of Gamma-glutamyl phosphate reductase from Salmonella newport (strain SL254).